The primary structure comprises 324 residues: Carbamate kinase (324 aa).

This sequence belongs to the carbamate kinase family.

The protein localises to the cytoplasm. It carries out the reaction hydrogencarbonate + NH4(+) + ATP = carbamoyl phosphate + ADP + H2O + H(+). It functions in the pathway amino-acid degradation; L-arginine degradation via ADI pathway. The polypeptide is Carbamate kinase (Rhizobium meliloti (strain 1021) (Ensifer meliloti)).